Reading from the N-terminus, the 1339-residue chain is Transcription factor tau subunit sfc3 (1339 aa).

Positions 470 to 515 (MESNAEVSPDGMTLLPRKRGRPRKSANISVTSSPIRPSKNENNLPS) are disordered. Positions 485-497 (PRKRGRPRKSANI) form a DNA-binding region, a.T hook. The span at 495–514 (ANISVTSSPIRPSKNENNLP) shows a compositional bias: polar residues. Ser-595 and Ser-596 each carry phosphoserine. Residues 791–826 (RRKSMPAEIKRHKESSETKPVDKEEVKKNEKEKDDP) form a disordered region. Basic and acidic residues predominate over residues 798 to 826 (EIKRHKESSETKPVDKEEVKKNEKEKDDP).

In terms of assembly, component of the TFIIIC complex including sfc1, sfc3, sfc4, sfc6 and sfc7. The subunits are organized in two globular domains, tauA and tauB, connected by a proteolysis-sensitive and flexible linker. Interacts with sfc1, sfc4 and sfc6.

The protein localises to the nucleus envelope. TFIIIC mediates tRNA and 5S RNA gene activation by binding to intragenic promoter elements. Upstream of the transcription start site, TFIIIC assembles the initiation complex TFIIIB-TFIIIC-tDNA, which is sufficient for RNA polymerase III recruitment and function. Part of the tauB domain of TFIIIC that binds boxB DNA promoter sites of tRNA and similar genes. Cooperates with sfc6 in DNA binding. Localizes to chromatin insulator sequence without recruiting RNA polymerase III and plays a role in nuclear organization. This is Transcription factor tau subunit sfc3 from Schizosaccharomyces pombe (strain 972 / ATCC 24843) (Fission yeast).